Reading from the N-terminus, the 160-residue chain is Cytochrome b6-f complex subunit 4 (160 aa).

Transmembrane regions (helical) follow at residues 36 to 56 (ILYM…GLAI), 95 to 115 (LLGI…PFIE), and 127 to 147 (PIAM…GAGA).

It belongs to the cytochrome b family. PetD subfamily. In terms of assembly, the 4 large subunits of the cytochrome b6-f complex are cytochrome b6, subunit IV (17 kDa polypeptide, PetD), cytochrome f and the Rieske protein, while the 4 small subunits are PetG, PetL, PetM and PetN. The complex functions as a dimer.

The protein resides in the cellular thylakoid membrane. In terms of biological role, component of the cytochrome b6-f complex, which mediates electron transfer between photosystem II (PSII) and photosystem I (PSI), cyclic electron flow around PSI, and state transitions. The protein is Cytochrome b6-f complex subunit 4 of Synechocystis sp. (strain ATCC 27184 / PCC 6803 / Kazusa).